The primary structure comprises 309 residues: Ribosomal protein L11 methyltransferase (309 aa).

S-adenosyl-L-methionine contacts are provided by T160, G181, D203, and N245.

Belongs to the methyltransferase superfamily. PrmA family.

Its subcellular location is the cytoplasm. It catalyses the reaction L-lysyl-[protein] + 3 S-adenosyl-L-methionine = N(6),N(6),N(6)-trimethyl-L-lysyl-[protein] + 3 S-adenosyl-L-homocysteine + 3 H(+). Functionally, methylates ribosomal protein L11. The polypeptide is Ribosomal protein L11 methyltransferase (Caldanaerobacter subterraneus subsp. tengcongensis (strain DSM 15242 / JCM 11007 / NBRC 100824 / MB4) (Thermoanaerobacter tengcongensis)).